A 365-amino-acid chain; its full sequence is MSGNTLGTIFAVTNFGESHGPAIGCVIDGCPPGMELAEADIQAELDRRRPGTSRHVTQRNEPDAVEILSGVYEGRTTGTPIALLIRNTDQRSKDYSNIAQSFRPGHADYTYWHKYGVRDPRGGGRSSARLTAPTVAAGAVARKWLQAKYGVELRACMTQLGELEIPFESWDHVPHNPFFAPVADVARYEEYMDALRKAGDSCGARLRVQARNVPVGLGEPLYDKLDADIAHAMMGLNAVKGVEIGAGFASVAQRGTTHGDSLTPKGFASNNAGGVLGGISTGQDIEVSLAIKPTSSIISPRESIDVHGQSTEVVTKGRHDPCVGIRAAPIAEALLAIVLMDHALRHRAQCGDVVQAVAPIQASFL.

Positions 48 and 54 each coordinate NADP(+). Residues R125–S127, N237–A238, G277, K292–S296, and R318 each bind FMN.

The protein belongs to the chorismate synthase family. Homotetramer. FMNH2 serves as cofactor.

It catalyses the reaction 5-O-(1-carboxyvinyl)-3-phosphoshikimate = chorismate + phosphate. Its pathway is metabolic intermediate biosynthesis; chorismate biosynthesis; chorismate from D-erythrose 4-phosphate and phosphoenolpyruvate: step 7/7. In terms of biological role, catalyzes the anti-1,4-elimination of the C-3 phosphate and the C-6 proR hydrogen from 5-enolpyruvylshikimate-3-phosphate (EPSP) to yield chorismate, which is the branch point compound that serves as the starting substrate for the three terminal pathways of aromatic amino acid biosynthesis. This reaction introduces a second double bond into the aromatic ring system. This Paracidovorax citrulli (strain AAC00-1) (Acidovorax citrulli) protein is Chorismate synthase.